Reading from the N-terminus, the 333-residue chain is Catabolite control protein A (333 aa).

In terms of domain architecture, HTH lacI-type spans 7–61 (ITIYDVAREAGVSMATVSRVVNGNKNVKENTRKKVLEVIDRLDYRPNAVARGLAS). A DNA-binding region (H-T-H motif) is located at residues 9–28 (IYDVAREAGVSMATVSRVVN).

Global transcriptional regulator of carbon catabolite repression (CCR) and carbon catabolite activation (CCA), which ensures optimal energy usage under diverse conditions. In Streptococcus mutans serotype c (strain ATCC 700610 / UA159), this protein is Catabolite control protein A (ccpA).